Here is a 479-residue protein sequence, read N- to C-terminus: ATP synthase subunit beta (479 aa).

162 to 169 (GGAGVGKT) lines the ATP pocket.

It belongs to the ATPase alpha/beta chains family. As to quaternary structure, F-type ATPases have 2 components, CF(1) - the catalytic core - and CF(0) - the membrane proton channel. CF(1) has five subunits: alpha(3), beta(3), gamma(1), delta(1), epsilon(1). CF(0) has three main subunits: a(1), b(2) and c(9-12). The alpha and beta chains form an alternating ring which encloses part of the gamma chain. CF(1) is attached to CF(0) by a central stalk formed by the gamma and epsilon chains, while a peripheral stalk is formed by the delta and b chains.

It is found in the cell membrane. The enzyme catalyses ATP + H2O + 4 H(+)(in) = ADP + phosphate + 5 H(+)(out). In terms of biological role, produces ATP from ADP in the presence of a proton gradient across the membrane. The catalytic sites are hosted primarily by the beta subunits. This is ATP synthase subunit beta from Mesoplasma florum (strain ATCC 33453 / NBRC 100688 / NCTC 11704 / L1) (Acholeplasma florum).